Reading from the N-terminus, the 339-residue chain is Glycerol-3-phosphate dehydrogenase [NAD(P)+] (339 aa).

NADPH-binding residues include Ser-31, Trp-32, Arg-52, and Lys-122. Sn-glycerol 3-phosphate contacts are provided by Lys-122 and Gly-152. Ala-156 is a binding site for NADPH. Sn-glycerol 3-phosphate is bound by residues Lys-207, Asp-260, Ser-270, Arg-271, and Asn-272. Lys-207 acts as the Proton acceptor in catalysis. An NADPH-binding site is contributed by Arg-271. Glu-293 provides a ligand contact to NADPH.

This sequence belongs to the NAD-dependent glycerol-3-phosphate dehydrogenase family.

It localises to the cytoplasm. It catalyses the reaction sn-glycerol 3-phosphate + NAD(+) = dihydroxyacetone phosphate + NADH + H(+). The catalysed reaction is sn-glycerol 3-phosphate + NADP(+) = dihydroxyacetone phosphate + NADPH + H(+). It functions in the pathway membrane lipid metabolism; glycerophospholipid metabolism. In terms of biological role, catalyzes the reduction of the glycolytic intermediate dihydroxyacetone phosphate (DHAP) to sn-glycerol 3-phosphate (G3P), the key precursor for phospholipid synthesis. This Tropheryma whipplei (strain Twist) (Whipple's bacillus) protein is Glycerol-3-phosphate dehydrogenase [NAD(P)+].